The sequence spans 738 residues: MAPTQAGHDTAYLKETVGEALARGCAAAISAQPNDPVEYLGLWLLKYVKNAEVEGNFYRERQQDLQKKKDRLVKEAQSEQAAKSVALTRKEAADALALVTAEPRELLEAAVKLVKQHTAAGAAYAAVVAEPEEPDWVAPEDDEAAAVETEDEAAGGAALAEGEEPPPEPEPEPEAAPEDGEGDAPAPKIPRPVDYSKKYFAYVAASAGQEHVLEADLYRPAPPPEDADEDFKPEPLPYSFRVLDEKLPMLYVPNVAAEERVKFFRKFPKIGSYQACGVALPASGEFKALLAADTLFPEGSGQPLSADDRDFVWEVSQSLSRALEAVQARAAEALAATSAAEAVEELKAKVAELREQAAAEAAAAAPPPPAEGEEGEGEAPPAEEEPPAEEEAEEEEEEAEEGAEEGAEEGEEGEEAPPKPKKKKKVFNPIPGLQAAIEKLTAAAEAATEADARAQAAVALEKQALDEVVALASSHSDATLSSLRNMLSVPQGTYHVVKALLHLLGRPAASFSTWKRAHSHFSPRLFEDMAAYDATAERDMAVWGRVRSCYKAAPAAKKLDAEMPNTLFGSVALMYIKQVRRVARKAVLQRELAAKLAKAQQDLADKQAALVEAERVKAEREAEEARLAAEAEAAAAAEAEAAARAAAEAEAAAAAEAAAEAAAEAAAAAAEAAAEAGEGEAVAEREAAPAEAEAAPAEGEAAPPAEGEGEAQPAQEGSNSSSSSSDSSSSEESKAAAE.

Arg104 bears the Asymmetric dimethylarginine mark. Composition is skewed to acidic residues over residues Pro134 to Ala153 and Glu161 to Gly182. Residues Pro134–Ile189 form a disordered region. Position 260 is an asymmetric dimethylarginine (Arg260). Positions Ala357–Val426 are disordered. The segment covering Glu371 to Glu415 has biased composition (acidic residues). Residues Arg453, Arg538, and Arg615 each carry the asymmetric dimethylarginine modification. The segment at Ala674–Glu738 is disordered. Residues Pro689–Ser730 are compositionally biased toward low complexity.

Belongs to the dpy-30 family. Post-translationally, asymmetrically dimethylated at Arg-104, Arg-260, Arg-453, Arg-538 and Arg-615 during flagellum resorption. Probably methylated by PRMT1.

It is found in the cytoplasm. It localises to the cytoskeleton. The protein localises to the flagellum axoneme. Functionally, flagellar radial spokes contribute to the regulation of dynein arm activity and thus the pattern of flagellar bending. They consist of a thin stalk, which is attached to the a subfiber of the outer doublet microtubule, and a bulbous head, which is attached to the stalk and appears to interact with the projections from the central pair of microtubules. Binds calmodulin in a calcium-dependent manner. This chain is Flagellar radial spoke protein 2, found in Chlamydomonas reinhardtii (Chlamydomonas smithii).